A 594-amino-acid polypeptide reads, in one-letter code: UvrABC system protein C (594 aa).

One can recognise a GIY-YIG domain in the interval 13 to 99 (NSSGVYQYFD…IKQLKPKYNI (87 aa)). The 36-residue stretch at 205–240 (DRLIKELELKMERLSNNLRFEEALIYRDRIAKIQKI) folds into the UVR domain.

It belongs to the UvrC family. Interacts with UvrB in an incision complex.

Its subcellular location is the cytoplasm. In terms of biological role, the UvrABC repair system catalyzes the recognition and processing of DNA lesions. UvrC both incises the 5' and 3' sides of the lesion. The N-terminal half is responsible for the 3' incision and the C-terminal half is responsible for the 5' incision. This chain is UvrABC system protein C, found in Helicobacter pylori (strain ATCC 700392 / 26695) (Campylobacter pylori).